Consider the following 396-residue polypeptide: S-adenosylmethionine synthase (396 aa).

His-16 contacts ATP. Asp-18 serves as a coordination point for Mg(2+). Position 44 (Glu-44) interacts with K(+). The L-methionine site is built by Glu-57 and Gln-100. The segment at 100-110 (QSPDIAQGVDR) is flexible loop. ATP-binding positions include 167 to 169 (DAK), 233 to 234 (RF), Asp-242, 248 to 249 (RK), Ala-265, and Lys-269. Asp-242 provides a ligand contact to L-methionine. Lys-273 is an L-methionine binding site.

It belongs to the AdoMet synthase family. Homotetramer; dimer of dimers. It depends on Mg(2+) as a cofactor. K(+) serves as cofactor.

Its subcellular location is the cytoplasm. The catalysed reaction is L-methionine + ATP + H2O = S-adenosyl-L-methionine + phosphate + diphosphate. It participates in amino-acid biosynthesis; S-adenosyl-L-methionine biosynthesis; S-adenosyl-L-methionine from L-methionine: step 1/1. Catalyzes the formation of S-adenosylmethionine (AdoMet) from methionine and ATP. The overall synthetic reaction is composed of two sequential steps, AdoMet formation and the subsequent tripolyphosphate hydrolysis which occurs prior to release of AdoMet from the enzyme. The polypeptide is S-adenosylmethionine synthase (Paraburkholderia phytofirmans (strain DSM 17436 / LMG 22146 / PsJN) (Burkholderia phytofirmans)).